We begin with the raw amino-acid sequence, 197 residues long: Zinc finger protein 581 (197 aa).

The segment covering 1–10 has biased composition (pro residues); the sequence is MLVLPSPCPQ. The segment at 1 to 52 is disordered; it reads MLVLPSPCPQPLAFSSVETMEGPPRRTCRSPEPGPSSSIGSPQASSPPRPNH. The span at 35 to 44 shows a compositional bias: low complexity; the sequence is PSSSIGSPQA. C2H2-type zinc fingers lie at residues 87-109, 115-137, 145-167, and 173-196; these read YSCPVCSRVFEYMSYLQRHSITH, FECDICGKAFKRASHLARHHSIH, HGCPLCPRRFRDAGELAQHSRVH, and FQCPHCPRRFMEQNTLQKHTRWKH.

The protein resides in the nucleus. In terms of biological role, may be involved in transcriptional regulation. The protein is Zinc finger protein 581 (ZNF581) of Homo sapiens (Human).